The chain runs to 249 residues: Ribonuclease 3 (249 aa).

The 130-residue stretch at 20-149 (FKEFQERISV…FIGALYLDQG (130 aa)) folds into the RNase III domain. Glu-62 lines the Mg(2+) pocket. Asp-66 is a catalytic residue. Residues Asp-135 and Glu-138 each coordinate Mg(2+). Residue Glu-138 is part of the active site. Residues 175 to 244 (DFKSQLQEFV…AQEALAKMQK (70 aa)) enclose the DRBM domain. Positions 223–249 (NGRSKKEAEQHAAQEALAKMQKHHTKQ) are disordered.

It belongs to the ribonuclease III family. Homodimer. Requires Mg(2+) as cofactor.

It localises to the cytoplasm. The enzyme catalyses Endonucleolytic cleavage to 5'-phosphomonoester.. Its function is as follows. Digests double-stranded RNA. Involved in the processing of primary rRNA transcript to yield the immediate precursors to the large and small rRNAs (23S and 16S). Processes some mRNAs, and tRNAs when they are encoded in the rRNA operon. Processes pre-crRNA and tracrRNA of type II CRISPR loci if present in the organism. In Bacillus velezensis (strain DSM 23117 / BGSC 10A6 / LMG 26770 / FZB42) (Bacillus amyloliquefaciens subsp. plantarum), this protein is Ribonuclease 3.